Here is a 471-residue protein sequence, read N- to C-terminus: tRNA(Ile)-lysidine synthase (471 aa).

35–40 is an ATP binding site; the sequence is SGGADS.

It belongs to the tRNA(Ile)-lysidine synthase family.

It localises to the cytoplasm. The catalysed reaction is cytidine(34) in tRNA(Ile2) + L-lysine + ATP = lysidine(34) in tRNA(Ile2) + AMP + diphosphate + H(+). Functionally, ligates lysine onto the cytidine present at position 34 of the AUA codon-specific tRNA(Ile) that contains the anticodon CAU, in an ATP-dependent manner. Cytidine is converted to lysidine, thus changing the amino acid specificity of the tRNA from methionine to isoleucine. This is tRNA(Ile)-lysidine synthase from Geobacter sulfurreducens (strain ATCC 51573 / DSM 12127 / PCA).